A 915-amino-acid chain; its full sequence is Translation initiation factor IF-2 (915 aa).

Residues 83-94 (QSRRAVEKEQIL) show a composition bias toward basic and acidic residues. Disordered regions lie at residues 83–177 (QSRR…PEPP), 216–280 (EADR…KPAV), and 293–328 (ISGM…LLRE). Composition is skewed to low complexity over residues 111 to 129 (VRAA…EAPS) and 137 to 164 (APAT…LSAP). A compositionally biased stretch (pro residues) spans 165-177 (LPEPVPEPVPEPP). Polar residues predominate over residues 293 to 305 (ISGMDDSSGTGSR). Residues 314-328 (MEREREQEEADLLRE) show a composition bias toward basic and acidic residues. The 171-residue stretch at 412-582 (TRPPVVTIMG…LTEAEMRELK (171 aa)) folds into the tr-type G domain. The G1 stretch occupies residues 421–428 (GHVDHGKT). A GTP-binding site is contributed by 421–428 (GHVDHGKT). A G2 region spans residues 446-450 (GITQH). Positions 468–471 (DTPG) are G3. Residues 468–472 (DTPGH) and 522–525 (NKMD) each bind GTP. The interval 522–525 (NKMD) is G4. Residues 558-560 (SAK) form a G5 region.

The protein belongs to the TRAFAC class translation factor GTPase superfamily. Classic translation factor GTPase family. IF-2 subfamily.

It is found in the cytoplasm. One of the essential components for the initiation of protein synthesis. Protects formylmethionyl-tRNA from spontaneous hydrolysis and promotes its binding to the 30S ribosomal subunits. Also involved in the hydrolysis of GTP during the formation of the 70S ribosomal complex. The sequence is that of Translation initiation factor IF-2 from Chlorobium luteolum (strain DSM 273 / BCRC 81028 / 2530) (Pelodictyon luteolum).